A 229-amino-acid polypeptide reads, in one-letter code: Guanylate kinase (229 aa).

Positions 7-42 (RVLQKCAYREEFKGDMERSTAATSKLPLEVELSRNS) constitute an RPE1 insert domain. The region spanning 44 to 222 (GLIIILSSPS…TLKKIHAIIV (179 aa)) is the Guanylate kinase-like domain. ATP is bound at residue 51 to 58 (SPSGTGKS).

The protein belongs to the guanylate kinase family.

It localises to the cytoplasm. The catalysed reaction is GMP + ATP = GDP + ADP. Functionally, essential for recycling GMP and indirectly, cGMP. The protein is Guanylate kinase (gmk) of Rickettsia conorii (strain ATCC VR-613 / Malish 7).